Consider the following 421-residue polypeptide: Atrochrysone carboxyl ACP thioesterase (421 aa).

Residues histidine 207, histidine 209, aspartate 211, and histidine 212 each contribute to the Zn(2+) site. The Proton donor/acceptor role is filled by aspartate 211.

The protein belongs to the metallo-beta-lactamase superfamily. Zn(2+) is required as a cofactor. As to expression, specifically expressed in conidia.

It carries out the reaction atrochrysone carboxyl-[ACP] + H2O = atrochrysone carboxylate + holo-[ACP] + H(+). It participates in secondary metabolite biosynthesis. Its function is as follows. Atrochrysone carboxyl ACP thioesterase; part of the gene cluster that mediates the biosynthesis of trypacidin, a mycotoxin with antiprotozoal activity and that plays a role in the infection process. The pathway begins with the synthesis of atrochrysone thioester by the polyketide synthase (PKS) tpcC. The atrochrysone carboxyl ACP thioesterase tpcB then breaks the thioester bond and releases the atrochrysone carboxylic acid from tpcC. The decarboxylase tpcK converts atrochrysone carboxylic acid to atrochrysone which is further reduced into emodin anthrone. The next step is performed by the emodin anthrone oxygenase tpcL that catalyzes the oxidation of emodin anthrone to emodin. Emodin O-methyltransferase encoded by tpcA catalyzes methylation of the 8-hydroxy group of emodin to form questin. Ring cleavage of questin by questin oxidase tpcI leads to desmethylsulochrin via several intermediates including questin epoxide. Another methylation step catalyzed by tpcM leads to the formation of sulochrin which is further converted to monomethylsulfochrin by tpcH. Finally, the tpcJ catalyzes the conversion of monomethylsulfochrin to trypacidin. Trypacidin is toxic for human pulmonary and bronchial epithelial cells by initiating the intracellular formation of nitric oxide (NO) and hydrogen peroxide (H(2)O(2)), thus triggering host necrotic cell death. The trypacidin pathway is also able to produce endocrocin via a distinct route from the endocrocin Enc pathway. This Aspergillus fumigatus (strain ATCC MYA-4609 / CBS 101355 / FGSC A1100 / Af293) (Neosartorya fumigata) protein is Atrochrysone carboxyl ACP thioesterase.